A 240-amino-acid polypeptide reads, in one-letter code: Probable peptide export permease protein YydJ (240 aa).

6 helical membrane passes run 13 to 33 (VIII…FLLV), 50 to 70 (SYTV…AFFI), 97 to 117 (IAVL…IISL), 126 to 146 (ALLL…IGTI), 153 to 173 (ILIS…LVAI), and 210 to 230 (VLFI…VLRF).

The complex is composed of 2 ATP-binding proteins (YydI), two transmembrane proteins (YydJ).

The protein localises to the cell membrane. Its function is as follows. Suggested to be part of an ABC transporter complex YydIJ involved in export of the modified peptide YydF. In Bacillus subtilis (strain 168), this protein is Probable peptide export permease protein YydJ (yydJ).